Here is a 262-residue protein sequence, read N- to C-terminus: Thiazole synthase (262 aa).

Catalysis depends on Lys96, which acts as the Schiff-base intermediate with DXP. 1-deoxy-D-xylulose 5-phosphate is bound by residues Gly157, 184-185 (AG), and 206-207 (NT).

The protein belongs to the ThiG family. In terms of assembly, homotetramer. Forms heterodimers with either ThiH or ThiS.

The protein localises to the cytoplasm. It catalyses the reaction [ThiS sulfur-carrier protein]-C-terminal-Gly-aminoethanethioate + 2-iminoacetate + 1-deoxy-D-xylulose 5-phosphate = [ThiS sulfur-carrier protein]-C-terminal Gly-Gly + 2-[(2R,5Z)-2-carboxy-4-methylthiazol-5(2H)-ylidene]ethyl phosphate + 2 H2O + H(+). It functions in the pathway cofactor biosynthesis; thiamine diphosphate biosynthesis. Functionally, catalyzes the rearrangement of 1-deoxy-D-xylulose 5-phosphate (DXP) to produce the thiazole phosphate moiety of thiamine. Sulfur is provided by the thiocarboxylate moiety of the carrier protein ThiS. In vitro, sulfur can be provided by H(2)S. In Legionella pneumophila (strain Lens), this protein is Thiazole synthase.